Reading from the N-terminus, the 75-residue chain is High-potential iron-sulfur protein (75 aa).

[4Fe-4S] cluster-binding residues include Cys-38, Cys-41, Cys-54, and Cys-68.

Homodimer. Monomer at different ionic strengths.

Specific class of high-redox-potential 4Fe-4S ferredoxins. Functions in anaerobic electron transport in most purple and in some other photosynthetic bacteria and in at least one genus (Paracoccus) of halophilic, denitrifying bacteria. Competent in photosynthetic electron transfer to oxidized cytochrome bc1 complex via the membrane-bound c-type tetraheme. The chain is High-potential iron-sulfur protein (hip) from Rhodoferax fermentans.